Consider the following 106-residue polypeptide: Chaperone modulatory protein CbpM (106 aa).

This sequence belongs to the CbpM family.

Interacts with CbpA and inhibits both the DnaJ-like co-chaperone activity and the DNA binding activity of CbpA. Together with CbpA, modulates the activity of the DnaK chaperone system. Does not inhibit the co-chaperone activity of DnaJ. In Coxiella burnetii (strain CbuK_Q154) (Coxiella burnetii (strain Q154)), this protein is Chaperone modulatory protein CbpM.